The primary structure comprises 257 residues: Type 2 phosphatidylinositol 4,5-bisphosphate 4-phosphatase (257 aa).

Positions Met1–Ser10 are enriched in basic and acidic residues. The interval Met1 to Pro34 is disordered. A compositionally biased stretch (polar residues) spans Leu13–Pro23. Position 22 is a phosphothreonine (Thr22). The residue at position 33 (Ser33) is a Phosphoserine. Cys107 is an active-site residue. A CX5R motif motif is present at residues Cys107–Arg113. 2 helical membrane passes run Cys192–Gly212 and Trp227–Ile247.

The protein resides in the late endosome membrane. It is found in the lysosome membrane. It localises to the cytoplasmic vesicle. The protein localises to the phagosome membrane. Its subcellular location is the cell membrane. The catalysed reaction is a 1,2-diacyl-sn-glycero-3-phospho-(1D-myo-inositol-4,5-bisphosphate) + H2O = a 1,2-diacyl-sn-glycero-3-phospho-(1D-myo-inositol-5-phosphate) + phosphate. Functionally, catalyzes the hydrolysis of phosphatidylinositol-4,5-bisphosphate (PtdIns-4,5-P2) to phosphatidylinositol-4-phosphate (PtdIns-4-P). Does not hydrolyze phosphatidylinositol 3,4,5-trisphosphate, phosphatidylinositol 3,4-bisphosphate, inositol 3,5-bisphosphate, inositol 3,4-bisphosphate, phosphatidylinositol 5-monophosphate, phosphatidylinositol 4-monophosphate and phosphatidylinositol 3-monophosphate. Negatively regulates the phagocytosis of large particles by reducing phagosomal phosphatidylinositol 4,5-bisphosphate accumulation during cup formation. In Bos taurus (Bovine), this protein is Type 2 phosphatidylinositol 4,5-bisphosphate 4-phosphatase.